A 203-amino-acid polypeptide reads, in one-letter code: Ribosome hibernation promotion factor (203 aa).

The protein belongs to the HPF/YfiA ribosome-associated protein family. Long HPF subfamily. As to quaternary structure, interacts with 100S ribosomes.

The protein resides in the cytoplasm. Its function is as follows. Required for dimerization of active 70S ribosomes into 100S ribosomes in stationary phase; 100S ribosomes are translationally inactive and sometimes present during exponential growth. This is Ribosome hibernation promotion factor from Bradyrhizobium diazoefficiens (strain JCM 10833 / BCRC 13528 / IAM 13628 / NBRC 14792 / USDA 110).